The sequence spans 364 residues: Dihydroorotate dehydrogenase (quinone) (364 aa).

FMN contacts are provided by residues 61-65 (AGFDK) and threonine 85. Position 65 (lysine 65) interacts with substrate. 110–114 (NRMGF) lines the substrate pocket. FMN contacts are provided by asparagine 139 and asparagine 170. Asparagine 170 is a substrate binding site. The active-site Nucleophile is the serine 173. Residue asparagine 175 coordinates substrate. Positions 214 and 242 each coordinate FMN. 243 to 244 (NT) lines the substrate pocket. FMN-binding positions include glycine 266, glycine 295, and 316–317 (YS).

The protein belongs to the dihydroorotate dehydrogenase family. Type 2 subfamily. As to quaternary structure, monomer. It depends on FMN as a cofactor.

Its subcellular location is the cell membrane. It catalyses the reaction (S)-dihydroorotate + a quinone = orotate + a quinol. It participates in pyrimidine metabolism; UMP biosynthesis via de novo pathway; orotate from (S)-dihydroorotate (quinone route): step 1/1. Its function is as follows. Catalyzes the conversion of dihydroorotate to orotate with quinone as electron acceptor. The polypeptide is Dihydroorotate dehydrogenase (quinone) (Rhodopseudomonas palustris (strain BisA53)).